The chain runs to 460 residues: UDP-N-acetylmuramoylalanine--D-glutamate ligase (460 aa).

120-126 (GSNGKTT) lines the ATP pocket.

It belongs to the MurCDEF family.

The protein resides in the cytoplasm. It carries out the reaction UDP-N-acetyl-alpha-D-muramoyl-L-alanine + D-glutamate + ATP = UDP-N-acetyl-alpha-D-muramoyl-L-alanyl-D-glutamate + ADP + phosphate + H(+). It participates in cell wall biogenesis; peptidoglycan biosynthesis. Functionally, cell wall formation. Catalyzes the addition of glutamate to the nucleotide precursor UDP-N-acetylmuramoyl-L-alanine (UMA). The polypeptide is UDP-N-acetylmuramoylalanine--D-glutamate ligase (Lactobacillus gasseri (strain ATCC 33323 / DSM 20243 / BCRC 14619 / CIP 102991 / JCM 1131 / KCTC 3163 / NCIMB 11718 / NCTC 13722 / AM63)).